Reading from the N-terminus, the 248-residue chain is DNA polymerase sliding clamp 2 (248 aa).

Belongs to the PCNA family. As to quaternary structure, the subunits circularize to form a toroid; DNA passes through its center. Replication factor C (RFC) is required to load the toroid on the DNA. Forms a dimeric complex with PCNA3 and trimeric complexes PCNA123 and PCNA323; does not form homotrimers. Crystal structures show a heterotetramer of 2 PCNA2 and 2 PCNA3, which would be large enough to clamp a Holliday junction.

In terms of biological role, sliding clamp subunit that acts as a moving platform for DNA processing. Responsible for tethering the catalytic subunit of DNA polymerase and other proteins to DNA during high-speed replication. Both trimeric complexes inhibit DNA ligase and both 3'-5' and 5'-3' activity of Hel308 (Hjm) helicase, but stimulate Hjc, the Holliday junction cleavage enzyme. The protein is DNA polymerase sliding clamp 2 of Sulfurisphaera tokodaii (strain DSM 16993 / JCM 10545 / NBRC 100140 / 7) (Sulfolobus tokodaii).